Consider the following 248-residue polypeptide: Methionine aminopeptidase (248 aa).

A substrate-binding site is contributed by histidine 77. Aspartate 94, aspartate 105, and histidine 169 together coordinate a divalent metal cation. Histidine 176 provides a ligand contact to substrate. A divalent metal cation is bound by residues glutamate 202 and glutamate 233.

It belongs to the peptidase M24A family. Methionine aminopeptidase type 1 subfamily. Monomer. It depends on Co(2+) as a cofactor. Zn(2+) is required as a cofactor. The cofactor is Mn(2+). Requires Fe(2+) as cofactor.

It catalyses the reaction Release of N-terminal amino acids, preferentially methionine, from peptides and arylamides.. In terms of biological role, removes the N-terminal methionine from nascent proteins. The N-terminal methionine is often cleaved when the second residue in the primary sequence is small and uncharged (Met-Ala-, Cys, Gly, Pro, Ser, Thr, or Val). Requires deformylation of the N(alpha)-formylated initiator methionine before it can be hydrolyzed. The chain is Methionine aminopeptidase from Mycoplasma genitalium (strain ATCC 33530 / DSM 19775 / NCTC 10195 / G37) (Mycoplasmoides genitalium).